A 324-amino-acid chain; its full sequence is Quinolinate synthase (324 aa).

2 residues coordinate iminosuccinate: His-39 and Ser-56. Cys-101 is a binding site for [4Fe-4S] cluster. Iminosuccinate is bound by residues 127–129 (YIN) and Ser-144. Residue Cys-187 coordinates [4Fe-4S] cluster. Iminosuccinate contacts are provided by residues 213-215 (HPE) and Thr-230. Cys-280 provides a ligand contact to [4Fe-4S] cluster.

Belongs to the quinolinate synthase family. Type 2 subfamily. It depends on [4Fe-4S] cluster as a cofactor.

The protein resides in the cytoplasm. The catalysed reaction is iminosuccinate + dihydroxyacetone phosphate = quinolinate + phosphate + 2 H2O + H(+). Its pathway is cofactor biosynthesis; NAD(+) biosynthesis; quinolinate from iminoaspartate: step 1/1. In terms of biological role, catalyzes the condensation of iminoaspartate with dihydroxyacetone phosphate to form quinolinate. The protein is Quinolinate synthase of Nostoc punctiforme (strain ATCC 29133 / PCC 73102).